Reading from the N-terminus, the 404-residue chain is uncharacterized protein (404 aa).

The next 11 membrane-spanning stretches (helical) occupy residues 9–29 (IYLIGELSAKCVPFLLLPYLS), 36–56 (GFGELSYYQTFLPLFVIFIGL), 76–96 (LVVKTGYAYTLSIGGLGLLFC), 103–123 (IMFYLVLSAIFQVFLSVQLSI), 135–155 (FIQVSSTITNAALTILMLEFY), 162–182 (KRILAILISNVFVALLSYLIY), 199–219 (AFFYIMSFGFLMIFHHGSFFI), 236–256 (LGLYAMGAQIAFILSVFILAI), 288–308 (IVPIPSLVTLIVPEQWLLFFL), 319–339 (IIVFLLSTSLTIPYLFLVNYL), and 366–386 (LIFTDVVYIPYASVLGALGIL).

Belongs to the polysaccharide synthase family. HI_0867/HI_1700 subfamily.

The protein localises to the cell membrane. This is an uncharacterized protein from Haemophilus influenzae (strain ATCC 51907 / DSM 11121 / KW20 / Rd).